Consider the following 461-residue polypeptide: tRNA modification GTPase MnmE (461 aa).

(6S)-5-formyl-5,6,7,8-tetrahydrofolate-binding residues include arginine 23, glutamate 84, and arginine 123. Residues 216-383 (GARAALIGRP…LGATVARLLL (168 aa)) form the TrmE-type G domain. Asparagine 226 is a K(+) binding site. GTP is bound by residues 226 to 231 (NAGKSS), 245 to 251 (TPIPGTT), and 270 to 273 (DTAG). A Mg(2+)-binding site is contributed by serine 230. Positions 245, 247, and 250 each coordinate K(+). A Mg(2+)-binding site is contributed by threonine 251. Lysine 461 contacts (6S)-5-formyl-5,6,7,8-tetrahydrofolate.

The protein belongs to the TRAFAC class TrmE-Era-EngA-EngB-Septin-like GTPase superfamily. TrmE GTPase family. Homodimer. Heterotetramer of two MnmE and two MnmG subunits. It depends on K(+) as a cofactor.

It localises to the cytoplasm. Exhibits a very high intrinsic GTPase hydrolysis rate. Involved in the addition of a carboxymethylaminomethyl (cmnm) group at the wobble position (U34) of certain tRNAs, forming tRNA-cmnm(5)s(2)U34. In Roseiflexus sp. (strain RS-1), this protein is tRNA modification GTPase MnmE.